The following is a 246-amino-acid chain: uncharacterized protein (246 aa).

NADP(+) is bound at residue 10–34 (VITGASSGIGEETVNLLSENGAKLV). Residue serine 140 coordinates substrate. The Proton acceptor role is filled by tyrosine 153.

The protein belongs to the short-chain dehydrogenases/reductases (SDR) family.

This is an uncharacterized protein from Staphylococcus saprophyticus subsp. saprophyticus (strain ATCC 15305 / DSM 20229 / NCIMB 8711 / NCTC 7292 / S-41).